A 265-amino-acid polypeptide reads, in one-letter code: Urease accessory protein UreH (265 aa).

The protein belongs to the UreD family. UreH, UreF and UreG form a complex that acts as a GTP-hydrolysis-dependent molecular chaperone, activating the urease apoprotein by helping to assemble the nickel containing metallocenter of UreC. The UreE protein probably delivers the nickel.

It is found in the cytoplasm. Required for maturation of urease via the functional incorporation of the urease nickel metallocenter. This is Urease accessory protein UreH from Helicobacter pylori (strain HPAG1).